A 254-amino-acid chain; its full sequence is Adenosylcobinamide-GDP ribazoletransferase (254 aa).

7 helical membrane passes run 27 to 47, 50 to 70, 104 to 124, 131 to 151, 170 to 190, 194 to 214, and 233 to 253; these read SSLY…VLFA, GMGA…GFIL, VGSF…ICLL, AYGM…LLAA, AGWP…FVLL, VVPS…VGWL, and LVEI…FSAI.

Belongs to the CobS family. Requires Mg(2+) as cofactor.

It is found in the cell inner membrane. It catalyses the reaction alpha-ribazole + adenosylcob(III)inamide-GDP = adenosylcob(III)alamin + GMP + H(+). It carries out the reaction alpha-ribazole 5'-phosphate + adenosylcob(III)inamide-GDP = adenosylcob(III)alamin 5'-phosphate + GMP + H(+). Its pathway is cofactor biosynthesis; adenosylcobalamin biosynthesis; adenosylcobalamin from cob(II)yrinate a,c-diamide: step 7/7. In terms of biological role, joins adenosylcobinamide-GDP and alpha-ribazole to generate adenosylcobalamin (Ado-cobalamin). Also synthesizes adenosylcobalamin 5'-phosphate from adenosylcobinamide-GDP and alpha-ribazole 5'-phosphate. This chain is Adenosylcobinamide-GDP ribazoletransferase, found in Chlorobaculum parvum (strain DSM 263 / NCIMB 8327) (Chlorobium vibrioforme subsp. thiosulfatophilum).